The following is a 279-amino-acid chain: Large ribosomal subunit protein uL2 (279 aa).

Disordered stretches follow at residues 29–53 (PEKS…TTRH) and 224–279 (VAMN…KKRK). Residues 253–268 (KEGRTRHPNKESDKLI) show a composition bias toward basic and acidic residues. Positions 269–279 (VRRRNAGKKRK) are enriched in basic residues.

Belongs to the universal ribosomal protein uL2 family. Part of the 50S ribosomal subunit. Forms a bridge to the 30S subunit in the 70S ribosome.

One of the primary rRNA binding proteins. Required for association of the 30S and 50S subunits to form the 70S ribosome, for tRNA binding and peptide bond formation. It has been suggested to have peptidyltransferase activity; this is somewhat controversial. Makes several contacts with the 16S rRNA in the 70S ribosome. This Leifsonia xyli subsp. xyli (strain CTCB07) protein is Large ribosomal subunit protein uL2.